The sequence spans 644 residues: Exoribonuclease 2 (644 aa).

One can recognise an RNB domain in the interval 189-516; sequence REDLTALNFV…NHRLLKAVIT (328 aa). The S1 motif domain occupies 561 to 643; it reads DIRFNAEIID…ETRGIVAKPA (83 aa).

Belongs to the RNR ribonuclease family. RNase II subfamily.

It is found in the cytoplasm. The catalysed reaction is Exonucleolytic cleavage in the 3'- to 5'-direction to yield nucleoside 5'-phosphates.. In terms of biological role, involved in mRNA degradation. Hydrolyzes single-stranded polyribonucleotides processively in the 3' to 5' direction. The chain is Exoribonuclease 2 from Pectobacterium atrosepticum (strain SCRI 1043 / ATCC BAA-672) (Erwinia carotovora subsp. atroseptica).